Here is a 231-residue protein sequence, read N- to C-terminus: Orotidine 5'-phosphate decarboxylase (231 aa).

Residues D11, K34, 61 to 70 (DLKLHDIPNT), T117, R179, Q188, G208, and R209 contribute to the substrate site. K63 functions as the Proton donor in the catalytic mechanism.

It belongs to the OMP decarboxylase family. Type 1 subfamily. Homodimer.

The enzyme catalyses orotidine 5'-phosphate + H(+) = UMP + CO2. The protein operates within pyrimidine metabolism; UMP biosynthesis via de novo pathway; UMP from orotate: step 2/2. In terms of biological role, catalyzes the decarboxylation of orotidine 5'-monophosphate (OMP) to uridine 5'-monophosphate (UMP). The protein is Orotidine 5'-phosphate decarboxylase of Streptococcus suis (strain 98HAH33).